The following is a 372-amino-acid chain: Forkhead box protein F1-B (372 aa).

The tract at residues 1-51 (MTAEIQQPPSQPPAQSSPMSAATDKHGGQPSAMESASCATKTKKTNAGIRR) is disordered. Residues 13-22 (PAQSSPMSAA) are compositionally biased toward low complexity. Positions 54–148 (KPPYSYIALI…EEGSFRRRPR (95 aa)) form a DNA-binding region, fork-head.

At the late gastrula stage, expressed in the presumptive ventrolateral mesoderm. During neurulation and tailbud stages, expressed in the lateral plate mesoderm and in the neural crest-derived structures of the head and branchial arches. During tailbud stages, expressed in the pronephros and pronephros ducts and in cells that migrate from the dorsolateral plate to the ventral region of the embryo (with the notable exception of the heart). These cells may represent hematopoietic or endothelial progenitor cells.

It is found in the nucleus. In terms of biological role, probable transcription factor. Required for smooth muscle (visceral mesoderm) differentiation during gut development. Also required for normal proliferation of the lateral plate mesoderm. Acts as a downstream mediator of bmp4-signaling. This is Forkhead box protein F1-B (foxf1-b) from Xenopus laevis (African clawed frog).